The sequence spans 60 residues: MAKLLVKQVRSKINCPLDQKRGLEALGLRKMGQVVEHDSNPTILGMINKVKHLVSVEEAK.

The protein belongs to the universal ribosomal protein uL30 family. In terms of assembly, part of the 50S ribosomal subunit.

The polypeptide is Large ribosomal subunit protein uL30 (Flavobacterium psychrophilum (strain ATCC 49511 / DSM 21280 / CIP 103535 / JIP02/86)).